Here is a 502-residue protein sequence, read N- to C-terminus: GTPase Obg (502 aa).

Residues 2–159 (NRFIDRVVLH…HDLILELKSM (158 aa)) enclose the Obg domain. An OBG-type G domain is found at 160-341 (ADVGLVGFPS…LKYKLLEIVQ (182 aa)). Residues 166–173 (GFPSAGKS), 191–195 (FTTLQ), 212–215 (DVPG), 292–295 (NKAD), and 322–324 (SAV) contribute to the GTP site. Mg(2+) is bound by residues Ser-173 and Thr-193. Residues 364–444 (DGRRRREEFE…IGGVTFEWEP (81 aa)) enclose the OCT domain.

Belongs to the TRAFAC class OBG-HflX-like GTPase superfamily. OBG GTPase family. Monomer. The cofactor is Mg(2+).

It is found in the cytoplasm. In terms of biological role, an essential GTPase which binds GTP, GDP and possibly (p)ppGpp with moderate affinity, with high nucleotide exchange rates and a fairly low GTP hydrolysis rate. Plays a role in control of the cell cycle, stress response, ribosome biogenesis and in those bacteria that undergo differentiation, in morphogenesis control. This chain is GTPase Obg, found in Corynebacterium efficiens (strain DSM 44549 / YS-314 / AJ 12310 / JCM 11189 / NBRC 100395).